Reading from the N-terminus, the 158-residue chain is 2-C-methyl-D-erythritol 2,4-cyclodiphosphate synthase (158 aa).

2 residues coordinate a divalent metal cation: D9 and H11. 4-CDP-2-C-methyl-D-erythritol 2-phosphate-binding positions include 9 to 11 and 35 to 36; these read DVH and HS. A divalent metal cation is bound at residue H43. 4-CDP-2-C-methyl-D-erythritol 2-phosphate-binding positions include 57 to 59 and R143; that span reads DIG.

It belongs to the IspF family. As to quaternary structure, homotrimer. A divalent metal cation is required as a cofactor.

It carries out the reaction 4-CDP-2-C-methyl-D-erythritol 2-phosphate = 2-C-methyl-D-erythritol 2,4-cyclic diphosphate + CMP. It participates in isoprenoid biosynthesis; isopentenyl diphosphate biosynthesis via DXP pathway; isopentenyl diphosphate from 1-deoxy-D-xylulose 5-phosphate: step 4/6. Involved in the biosynthesis of isopentenyl diphosphate (IPP) and dimethylallyl diphosphate (DMAPP), two major building blocks of isoprenoid compounds. Catalyzes the conversion of 4-diphosphocytidyl-2-C-methyl-D-erythritol 2-phosphate (CDP-ME2P) to 2-C-methyl-D-erythritol 2,4-cyclodiphosphate (ME-CPP) with a corresponding release of cytidine 5-monophosphate (CMP). This chain is 2-C-methyl-D-erythritol 2,4-cyclodiphosphate synthase, found in Chromobacterium violaceum (strain ATCC 12472 / DSM 30191 / JCM 1249 / CCUG 213 / NBRC 12614 / NCIMB 9131 / NCTC 9757 / MK).